The primary structure comprises 336 residues: Ketol-acid reductoisomerase (NADP(+)) (336 aa).

In terms of domain architecture, KARI N-terminal Rossmann spans 1–182; that stretch reads MAVIYYDKDA…GVTRAGVIET (182 aa). NADP(+) is bound by residues 25–28, R48, S51, S53, and 83–86; these read FGSQ and DEHQ. H108 is a catalytic residue. NADP(+) is bound at residue G134. The region spanning 183–328 is the KARI C-terminal knotted domain; sequence TFKEETETDL…KELRKMMPWL (146 aa). Positions 191, 195, 227, and 231 each coordinate Mg(2+). A substrate-binding site is contributed by S252.

Belongs to the ketol-acid reductoisomerase family. Mg(2+) is required as a cofactor.

It carries out the reaction (2R)-2,3-dihydroxy-3-methylbutanoate + NADP(+) = (2S)-2-acetolactate + NADPH + H(+). The catalysed reaction is (2R,3R)-2,3-dihydroxy-3-methylpentanoate + NADP(+) = (S)-2-ethyl-2-hydroxy-3-oxobutanoate + NADPH + H(+). It participates in amino-acid biosynthesis; L-isoleucine biosynthesis; L-isoleucine from 2-oxobutanoate: step 2/4. The protein operates within amino-acid biosynthesis; L-valine biosynthesis; L-valine from pyruvate: step 2/4. In terms of biological role, involved in the biosynthesis of branched-chain amino acids (BCAA). Catalyzes an alkyl-migration followed by a ketol-acid reduction of (S)-2-acetolactate (S2AL) to yield (R)-2,3-dihydroxy-isovalerate. In the isomerase reaction, S2AL is rearranged via a Mg-dependent methyl migration to produce 3-hydroxy-3-methyl-2-ketobutyrate (HMKB). In the reductase reaction, this 2-ketoacid undergoes a metal-dependent reduction by NADPH to yield (R)-2,3-dihydroxy-isovalerate. This is Ketol-acid reductoisomerase (NADP(+)) from Thermotoga neapolitana (strain ATCC 49049 / DSM 4359 / NBRC 107923 / NS-E).